We begin with the raw amino-acid sequence, 262 residues long: Hydroxyethylthiazole kinase (262 aa).

M50 lines the substrate pocket. 2 residues coordinate ATP: R125 and T171. A substrate-binding site is contributed by G198.

The protein belongs to the Thz kinase family. Mg(2+) is required as a cofactor.

The catalysed reaction is 5-(2-hydroxyethyl)-4-methylthiazole + ATP = 4-methyl-5-(2-phosphooxyethyl)-thiazole + ADP + H(+). It functions in the pathway cofactor biosynthesis; thiamine diphosphate biosynthesis; 4-methyl-5-(2-phosphoethyl)-thiazole from 5-(2-hydroxyethyl)-4-methylthiazole: step 1/1. Catalyzes the phosphorylation of the hydroxyl group of 4-methyl-5-beta-hydroxyethylthiazole (THZ). The polypeptide is Hydroxyethylthiazole kinase (Escherichia fergusonii (strain ATCC 35469 / DSM 13698 / CCUG 18766 / IAM 14443 / JCM 21226 / LMG 7866 / NBRC 102419 / NCTC 12128 / CDC 0568-73)).